The primary structure comprises 493 residues: Neuronal acetylcholine receptor subunit alpha-6 (493 aa).

A signal peptide spans 1-30; the sequence is MLNGWGRGDLRSGLCLWICGFLAFFKGSRG. Topologically, residues 31-240 are extracellular; it reads CVSEEQLFHT…TYSFYIRRLP (210 aa). N-linked (GlcNAc...) asparagine glycosylation is found at N54 and N171. 2 disulfide bridges follow: C158–C172 and C222–C223. Helical transmembrane passes span 241 to 265, 272 to 290, and 306 to 327; these read MFYT…FYLP, VTLC…LVIT, and YLLF…VLNI. The Cytoplasmic portion of the chain corresponds to 328-464; it reads HYRTPATHTM…WKYMAMVVDR (137 aa). S401 carries the post-translational modification Phosphoserine. Residues 465-484 traverse the membrane as a helical segment; sequence VFLWVFIIVCVFGTVGLFLQ.

The protein belongs to the ligand-gated ion channel (TC 1.A.9) family. Acetylcholine receptor (TC 1.A.9.1) subfamily. Alpha-6/CHRNA6 sub-subfamily. Neuronal AChR is composed of two different types of subunits: alpha and non-alpha (beta). CHRNA6/alpha-6 subunit can be combined to CHRNB2/beta-2 and CHRNA4/alpha-4 to give rise to functional receptors. Interacts with LYPD6. Predominantly expressed in only a few brain areas, including dopaminergic neurons, norepirephrine neurons and cells of the visual system.

It is found in the synaptic cell membrane. The enzyme catalyses Ca(2+)(in) = Ca(2+)(out). The catalysed reaction is K(+)(in) = K(+)(out). It catalyses the reaction Na(+)(in) = Na(+)(out). With respect to regulation, activated by a myriad of ligands such as acetylcholine, cytisine and nicotine. CHRNA6 nAChR activity is inhibited by the antagonists alpha-conotoxin MII and PIA, a small disulfide-constrained peptides from cone snails. In terms of biological role, component of neuronal acetylcholine receptors (nAChRs) that function as pentameric, ligand-gated cation channels with high calcium permeability among other activities. nAChRs are excitatory neurotrasnmitter receptors formed by a collection of nAChR subunits known to mediate synaptic transmission in the nervous system and the neuromuscular junction. Each nAchR subunit confers differential attributes to channel properties, including activation, deactivation and desensitization kinetics, pH sensitivity, cation permeability, and binding to allosteric modulators. CHRNA6 forms pentameric channels with CHRNB2 and CHRNA4 that exhibit high sensitivity to ACh and nicotine and are predominantly expressed in only a few brain areas, including dopaminergic neurons, norepirephrine neurons and cells of the visual system. nAChrs containing CHRNA6 subunits mediate endogenous cholinergic modulation of dopamine and gamma-aminobutyric acid (GABA) release in response to nicotine at nerve terminals. In Rattus norvegicus (Rat), this protein is Neuronal acetylcholine receptor subunit alpha-6 (Chrna6).